We begin with the raw amino-acid sequence, 490 residues long: Katanin p60 ATPase-containing subunit A-like 1 (490 aa).

M1 carries the post-translational modification N-acetylmethionine. The interval 95–184 (DPAVWPPPVP…DGEMPKFDGA (90 aa)) is disordered. A compositionally biased stretch (basic and acidic residues) spans 116-127 (PNREVRPLRKEM). Residues 128 to 139 (AGVGARGPVGRA) show a composition bias toward low complexity. A compositionally biased stretch (basic and acidic residues) spans 143–169 (SKSEKPSTSRDKDYRARGRDDKGRKNM). Residue S174 is modified to Phosphoserine. 248–255 (GPPGTGKT) serves as a coordination point for ATP.

Belongs to the AAA ATPase family. Katanin p60 subunit A1 subfamily. A-like 1 sub-subfamily. In terms of assembly, interacts with KATNB1 and KATNBL1. As to expression, expressed in testis, restricted to Sertoli cells (at protein level).

It is found in the cytoplasm. The protein localises to the cytoskeleton. Its subcellular location is the spindle pole. It localises to the spindle. It carries out the reaction n ATP + n H2O + a microtubule = n ADP + n phosphate + (n+1) alpha/beta tubulin heterodimers.. Functionally, regulates microtubule dynamics in Sertoli cells, a process that is essential for spermiogenesis and male fertility. Severs microtubules in an ATP-dependent manner, promoting rapid reorganization of cellular microtubule arrays. Has microtubule-severing activity in vitro. The protein is Katanin p60 ATPase-containing subunit A-like 1 of Homo sapiens (Human).